A 139-amino-acid polypeptide reads, in one-letter code: D-ribose pyranase (139 aa).

Catalysis depends on His20, which acts as the Proton donor. Substrate is bound by residues Asp28, His106, and 128-130; that span reads YAN.

It belongs to the RbsD / FucU family. RbsD subfamily. As to quaternary structure, homodecamer.

It is found in the cytoplasm. The enzyme catalyses beta-D-ribopyranose = beta-D-ribofuranose. It functions in the pathway carbohydrate metabolism; D-ribose degradation; D-ribose 5-phosphate from beta-D-ribopyranose: step 1/2. Its function is as follows. Catalyzes the interconversion of beta-pyran and beta-furan forms of D-ribose. This chain is D-ribose pyranase, found in Shewanella halifaxensis (strain HAW-EB4).